The following is a 1161-amino-acid chain: Nardilysin (1161 aa).

Positions 1–18 are cleaved as a signal peptide; sequence MLRRVAVAAVCVTGRKLR. Disordered regions lie at residues 49 to 103 and 130 to 218; these read MPGR…IIKS and VEGK…KKTT. S85, S91, and S93 each carry phosphoserine. Acidic residues predominate over residues 138–209; that stretch reads TDEEEEEEEE…EENELEELEE (72 aa). H244 contributes to the Zn(2+) binding site. The active-site Proton acceptor is E247. 2 residues coordinate Zn(2+): H248 and E325.

It belongs to the peptidase M16 family. As to quaternary structure, interacts with BACE1 and NRG1. Requires Zn(2+) as cofactor. In terms of tissue distribution, highly expressed in brain of early postnatal mice but expressed at a lower level in the brains of adult mice. Expression is high in cortical neurons, and lower in neurons in the striatum. Very low expression detected in the corpus callosum. Also expressed in the gray matter in spinal cord and dorsal root ganglia.

The protein resides in the mitochondrion. The protein localises to the cell projection. It localises to the dendrite. The enzyme catalyses Hydrolysis of polypeptides, preferably at -Xaa-|-Arg-Lys-, and less commonly at -Arg-|-Arg-Xaa-, in which Xaa is not Arg or Lys.. In terms of biological role, cleaves peptide substrates on the N-terminus of arginine residues in dibasic pairs. Is a critical activator of BACE1- and ADAM17-mediated pro-neuregulin ectodomain shedding, involved in the positive regulation of axonal maturation and myelination. Required for proper functioning of 2-oxoglutarate dehydrogenase (OGDH). The protein is Nardilysin of Mus musculus (Mouse).